Here is a 169-residue protein sequence, read N- to C-terminus: Putative phosphoesterase SE_0715 (169 aa).

The Proton donor role is filled by histidine 34. 2 consecutive short sequence motifs (HXTX) follow at residues 34–37 (HITI) and 115–118 (HFTI). The active-site Proton acceptor is the histidine 115.

Belongs to the 2H phosphoesterase superfamily. YjcG family.

This Staphylococcus epidermidis (strain ATCC 12228 / FDA PCI 1200) protein is Putative phosphoesterase SE_0715.